A 343-amino-acid polypeptide reads, in one-letter code: UDP-3-O-acylglucosamine N-acyltransferase (343 aa).

The active-site Proton acceptor is the histidine 238.

The protein belongs to the transferase hexapeptide repeat family. LpxD subfamily. Homotrimer.

It catalyses the reaction a UDP-3-O-[(3R)-3-hydroxyacyl]-alpha-D-glucosamine + a (3R)-hydroxyacyl-[ACP] = a UDP-2-N,3-O-bis[(3R)-3-hydroxyacyl]-alpha-D-glucosamine + holo-[ACP] + H(+). It participates in bacterial outer membrane biogenesis; LPS lipid A biosynthesis. In terms of biological role, catalyzes the N-acylation of UDP-3-O-acylglucosamine using 3-hydroxyacyl-ACP as the acyl donor. Is involved in the biosynthesis of lipid A, a phosphorylated glycolipid that anchors the lipopolysaccharide to the outer membrane of the cell. The sequence is that of UDP-3-O-acylglucosamine N-acyltransferase from Marinomonas sp. (strain MWYL1).